A 265-amino-acid chain; its full sequence is Probable trehalose-phosphate phosphatase (265 aa).

The active-site Nucleophile is Asp35. Mg(2+)-binding residues include Asp35, Asp37, and Asp213. 35 to 37 provides a ligand contact to substrate; sequence DID.

It belongs to the trehalose phosphatase family. Mg(2+) is required as a cofactor.

It catalyses the reaction alpha,alpha-trehalose 6-phosphate + H2O = alpha,alpha-trehalose + phosphate. It participates in glycan biosynthesis; trehalose biosynthesis. Its function is as follows. Removes the phosphate from trehalose 6-phosphate to produce free trehalose. In Sinorhizobium fredii (strain NBRC 101917 / NGR234), this protein is Probable trehalose-phosphate phosphatase (otsB).